The following is a 444-amino-acid chain: Ribosomal protein uS12 methylthiotransferase RimO (444 aa).

An MTTase N-terminal domain is found at 4–118 (IKYGVVSLGC…LSDAIKKSIE (115 aa)). [4Fe-4S] cluster contacts are provided by Cys-13, Cys-48, Cys-81, Cys-155, Cys-159, and Cys-162. The Radical SAM core domain maps to 141-373 (TTQKHYAYLR…MQRDIVKSIN (233 aa)). The TRAM domain maps to 374-440 (ADKVNKVYKV…EYDLIGVVCD (67 aa)).

The protein belongs to the methylthiotransferase family. RimO subfamily. The cofactor is [4Fe-4S] cluster.

It localises to the cytoplasm. It carries out the reaction L-aspartate(89)-[ribosomal protein uS12]-hydrogen + (sulfur carrier)-SH + AH2 + 2 S-adenosyl-L-methionine = 3-methylsulfanyl-L-aspartate(89)-[ribosomal protein uS12]-hydrogen + (sulfur carrier)-H + 5'-deoxyadenosine + L-methionine + A + S-adenosyl-L-homocysteine + 2 H(+). Functionally, catalyzes the methylthiolation of an aspartic acid residue of ribosomal protein uS12. The chain is Ribosomal protein uS12 methylthiotransferase RimO from Clostridium tetani (strain Massachusetts / E88).